We begin with the raw amino-acid sequence, 591 residues long: L-fucose isomerase (591 aa).

Catalysis depends on proton acceptor residues Glu337 and Asp361. Residues Glu337, Asp361, and His528 each coordinate Mn(2+).

Belongs to the L-fucose isomerase family. In terms of assembly, homohexamer. The cofactor is Mn(2+).

The protein resides in the cytoplasm. The catalysed reaction is L-fucose = L-fuculose. It participates in carbohydrate degradation; L-fucose degradation; L-lactaldehyde and glycerone phosphate from L-fucose: step 1/3. In terms of biological role, converts the aldose L-fucose into the corresponding ketose L-fuculose. This is L-fucose isomerase from Escherichia coli O157:H7 (strain EC4115 / EHEC).